An 803-amino-acid chain; its full sequence is Volume-regulated anion channel subunit LRRC8C (803 aa).

The Cytoplasmic portion of the chain corresponds to 1 to 22 (MIPVTEFRQFSEQQPAFRVLKP). Residues 23 to 43 (WWDVFTDYLSVAMLMIGVFGC) form a helical membrane-spanning segment. At 44 to 125 (TLQVMQDKII…YERALHWYAK (82 aa)) the chain is on the extracellular side. Disulfide bonds link C54–C308 and C115–C293. N-linked (GlcNAc...) asparagine glycans are attached at residues N64 and N70. Residues 126-146 (YFPYLVLIHTLVFMLCSNFWF) form a helical membrane-spanning segment. At 147–266 (KFPGSSSKIE…ILYAMYVRQT (120 aa)) the chain is on the cytoplasmic side. Residues 177 to 211 (EVSGEDSEEKDNRKNNMNRSNTIQSGPEGSLVKSQ) form a disordered region. The segment covering 191–211 (NNMNRSNTIQSGPEGSLVKSQ) has biased composition (polar residues). Phosphoserine is present on residues S212 and S215. The helical transmembrane segment at 267–287 (VLKVIKFLIIIAYNSALVSKV) threads the bilayer. Residues 288–320 (QFTVDCNVDIQDMTGYKNFSCNHTMAHLFSKLS) are Extracellular-facing. The chain crosses the membrane as a helical span at residues 321–341 (FCYLCFVSIYGLTCLYTLYWL). Residues 342–803 (FYRSLREYSF…SDVREQMKAD (462 aa)) lie on the Cytoplasmic side of the membrane. LRR repeat units follow at residues 397 to 420 (ENKL…KLQT), 421 to 443 (NAHN…VFEI), 446 to 466 (LQSL…IAQL), 467 to 488 (DNLQ…ALSF), 490 to 513 (KENL…MYGL), 515 to 537 (NLEE…TLES), 541 to 563 (LKSL…VVDV), 565 to 587 (SHLQ…NLKK), 588 to 611 (MTNL…VFSL), 613 to 635 (SLQE…SFQH), 637 to 659 (RKLT…IKKL), 660 to 682 (TSLE…LFLC), 684 to 705 (KIRY…IGVL), 706 to 728 (QSLQ…LYFC), 730 to 751 (KLKT…IGNL), 752 to 774 (LFLS…LGDC), and 776 to 799 (ALKR…VREQ).

Belongs to the LRRC8 family. Heterohexamer; oligomerizes with other LRRC8 proteins (LRRC8A, LRRC8B, LRRC8D and/or LRRC8E) to form a heterohexamer. Homoheptamer; inactive, likely because it is not targeted to the plasma membrane in the absence of LRRC8A. In vivo, the subunit composition may depend primarily on expression levels, and heterooligomeric channels containing various proportions of the different LRRC8 proteins may coexist.

The protein localises to the cell membrane. It localises to the endoplasmic reticulum membrane. The enzyme catalyses chloride(in) = chloride(out). It catalyses the reaction iodide(out) = iodide(in). It carries out the reaction taurine(out) = taurine(in). The catalysed reaction is 2',3'-cGAMP(out) = 2',3'-cGAMP(in). Functionally, non-essential component of the volume-regulated anion channel (VRAC, also named VSOAC channel), an anion channel required to maintain a constant cell volume in response to extracellular or intracellular osmotic changes. The VRAC channel conducts iodide better than chloride and can also conduct organic osmolytes like taurine. Plays a redundant role in the efflux of amino acids, such as aspartate and glutamate, in response to osmotic stress. The VRAC channel also mediates transport of immunoreactive cyclic dinucleotide GMP-AMP (2'-3'-cGAMP), an immune messenger produced in response to DNA virus in the cytosol. Channel activity requires LRRC8A plus at least one other family member (LRRC8B, LRRC8C, LRRC8D or LRRC8E); channel characteristics depend on the precise subunit composition. The protein is Volume-regulated anion channel subunit LRRC8C of Rattus norvegicus (Rat).